A 503-amino-acid polypeptide reads, in one-letter code: Surface lipoprotein assembly modifier (503 aa).

An N-terminal signal peptide occupies residues 1-34 (MTITPVYTTFTPTKTPIKFFMAGLTFLIAHISHA). Positions 38 to 220 (RTDNQEPINQ…QYRQALKQRD (183 aa)) are N-terminal domain. One copy of the TPR repeat lies at 136–169 (ILLGYANALAALDKGNAKKAIDELRRIIAIMPEY). Residues 221-503 (SWTWQVGMNL…QMFVEFSRIF (283 aa)) form a C-terminal probable beta barrel region. 14 beta stranded membrane-spanning segments follow: residues 222–232 (WTWQVGMNLAK), 259–270 (LSYQLGADKKWS), 275–285 (AYVGANAQIYG), 299–308 (GRLGANLGFA), 313–322 (DLSIETYGEK), 334–343 (IGIRMSVDYR), 348–358 (FQSLNAIDISR), 372–382 (TLYSTSLIYYP), 387–396 (YYLLGADFYD), 410–419 (RGIRTAWGQE), 424–434 (LSSRAQISINK), 454–463 (MQASLSLWHR), 470–479 (ITPRLTISTN), and 493–503 (NQMFVEFSRIF).

This sequence belongs to the Slam family.

The protein localises to the cell outer membrane. Required for correct export to the cell surface of some cell outer membrane lipoproteins (tested with TpbP) upon heterologous expression in E.coli and probably also in Moraxella. The chain is Surface lipoprotein assembly modifier from Moraxella catarrhalis (Branhamella catarrhalis).